A 265-amino-acid chain; its full sequence is Probable autolysin SsaALP (265 aa).

A signal peptide spans 1 to 25; sequence MKKLAFAITATSGAAAFLTHHDAQA. LysM domains are found at residues 27-70 and 89-132; these read TQHT…VISV and SSHT…TLQI. Residues 72 to 92 form a disordered region; that stretch reads GSDAQNTSNTSPQAGSASSHT. The span at 74-92 shows a compositional bias: polar residues; it reads DAQNTSNTSPQAGSASSHT. One can recognise a Peptidase C51 domain in the interval 141 to 265; it reads TPTATTGSNG…SEVSSYAFIH (125 aa).

The enzyme catalyses Hydrolyzes the link between N-acetylmuramoyl residues and L-amino acid residues in certain cell-wall glycopeptides.. Its function is as follows. Has weak lytic activity toward S.aureus cells. The chain is Probable autolysin SsaALP from Staphylococcus aureus (strain NCTC 8325 / PS 47).